A 691-amino-acid chain; its full sequence is DNA ligase (691 aa).

NAD(+)-binding positions include 53 to 57 (DSEYD), 102 to 103 (SL), and Glu135. Catalysis depends on Lys137, which acts as the N6-AMP-lysine intermediate. Arg158, Glu195, Lys310, and Lys334 together coordinate NAD(+). Zn(2+) is bound by residues Cys428, Cys431, Cys446, and Cys452. The BRCT domain maps to 613-691 (SEGLPLDGQT…EEEFLALVGE (79 aa)).

Belongs to the NAD-dependent DNA ligase family. LigA subfamily. The cofactor is Mg(2+). Mn(2+) serves as cofactor.

It carries out the reaction NAD(+) + (deoxyribonucleotide)n-3'-hydroxyl + 5'-phospho-(deoxyribonucleotide)m = (deoxyribonucleotide)n+m + AMP + beta-nicotinamide D-nucleotide.. In terms of biological role, DNA ligase that catalyzes the formation of phosphodiester linkages between 5'-phosphoryl and 3'-hydroxyl groups in double-stranded DNA using NAD as a coenzyme and as the energy source for the reaction. It is essential for DNA replication and repair of damaged DNA. This Psychrobacter arcticus (strain DSM 17307 / VKM B-2377 / 273-4) protein is DNA ligase.